Reading from the N-terminus, the 159-residue chain is Growth arrest and DNA damage-inducible protein GADD45 gamma (159 aa).

A homodimerization region spans residues 43–86 (VYESAKVLNVDPDNVTFCVLAADEEDEGDIALQIHFTLIQAFCC).

This sequence belongs to the GADD45 family. As to quaternary structure, undergoes concentration-dependent homodimerization, which is required for growth inhibititory activity and enhances interaction with PCNA. Interacts with GADD45GIP1. Interacts with PCNA.

In terms of biological role, involved in the regulation of growth and apoptosis. Mediates activation of stress-responsive MTK1/MEKK4 MAPKKK. The polypeptide is Growth arrest and DNA damage-inducible protein GADD45 gamma (Gadd45g) (Rattus norvegicus (Rat)).